We begin with the raw amino-acid sequence, 351 residues long: UDP-N-acetylglucosamine--N-acetylmuramyl-(pentapeptide) pyrophosphoryl-undecaprenol N-acetylglucosamine transferase (351 aa).

Residues 11–13, Asn120, Arg161, Ser187, and Gln281 contribute to the UDP-N-acetyl-alpha-D-glucosamine site; that span reads TGG.

Belongs to the glycosyltransferase 28 family. MurG subfamily.

It localises to the cell inner membrane. The catalysed reaction is di-trans,octa-cis-undecaprenyl diphospho-N-acetyl-alpha-D-muramoyl-L-alanyl-D-glutamyl-meso-2,6-diaminopimeloyl-D-alanyl-D-alanine + UDP-N-acetyl-alpha-D-glucosamine = di-trans,octa-cis-undecaprenyl diphospho-[N-acetyl-alpha-D-glucosaminyl-(1-&gt;4)]-N-acetyl-alpha-D-muramoyl-L-alanyl-D-glutamyl-meso-2,6-diaminopimeloyl-D-alanyl-D-alanine + UDP + H(+). It functions in the pathway cell wall biogenesis; peptidoglycan biosynthesis. Functionally, cell wall formation. Catalyzes the transfer of a GlcNAc subunit on undecaprenyl-pyrophosphoryl-MurNAc-pentapeptide (lipid intermediate I) to form undecaprenyl-pyrophosphoryl-MurNAc-(pentapeptide)GlcNAc (lipid intermediate II). This chain is UDP-N-acetylglucosamine--N-acetylmuramyl-(pentapeptide) pyrophosphoryl-undecaprenol N-acetylglucosamine transferase, found in Rippkaea orientalis (strain PCC 8801 / RF-1) (Cyanothece sp. (strain PCC 8801)).